Here is a 364-residue protein sequence, read N- to C-terminus: Dimethylsulfoniopropionate demethylase DmdA (364 aa).

Belongs to the GcvT family. DmdA subfamily.

It catalyses the reaction S,S-dimethyl-beta-propiothetin + (6S)-5,6,7,8-tetrahydrofolate = 3-(methylsulfanyl)propanoate + (6S)-5-methyl-5,6,7,8-tetrahydrofolate + H(+). Involved in the assimilation of dimethylsulphoniopropionate (DMSP), an important compound in the fixation of carbon in marine phytoplankton, by mediating demethylation of dimethylsulfoniopropionate (DMSP) to methyl-mercaptopropionate (MMPA). The intracellular concentration of DMSP is estimated to be 70 mM. In Ruegeria pomeroyi (strain ATCC 700808 / DSM 15171 / DSS-3) (Silicibacter pomeroyi), this protein is Dimethylsulfoniopropionate demethylase DmdA.